Reading from the N-terminus, the 256-residue chain is Small ribosomal subunit protein eS1 (256 aa).

Residue Ala-2 is modified to N-acetylalanine; partial.

This sequence belongs to the eukaryotic ribosomal protein eS1 family. As to quaternary structure, component of the small ribosomal subunit. Mature ribosomes consist of a small (40S) and a large (60S) subunit. The 40S subunit contains about 33 different proteins and 1 molecule of RNA (18S). The 60S subunit contains about 49 different proteins and 3 molecules of RNA (25S, 5.8S and 5S).

The protein localises to the cytoplasm. The sequence is that of Small ribosomal subunit protein eS1 from Candida albicans (strain SC5314 / ATCC MYA-2876) (Yeast).